The chain runs to 405 residues: Glucose-1-phosphate adenylyltransferase (405 aa).

Alpha-D-glucose 1-phosphate is bound by residues Gly164, 179–180 (EK), and Ser197.

Belongs to the bacterial/plant glucose-1-phosphate adenylyltransferase family. Homotetramer.

The enzyme catalyses alpha-D-glucose 1-phosphate + ATP + H(+) = ADP-alpha-D-glucose + diphosphate. It participates in glycan biosynthesis; glycogen biosynthesis. In terms of biological role, involved in the biosynthesis of ADP-glucose, a building block required for the elongation reactions to produce glycogen. Catalyzes the reaction between ATP and alpha-D-glucose 1-phosphate (G1P) to produce pyrophosphate and ADP-Glc. The protein is Glucose-1-phosphate adenylyltransferase of Corynebacterium jeikeium (strain K411).